Consider the following 40-residue polypeptide: Dolichyl-diphosphooligosaccharide--protein glycosyltransferase subunit 4 (40 aa).

Residues 1 to 4 lie on the Lumenal side of the membrane; the sequence is MISD. The helical transmembrane segment at 5-25 threads the bilayer; that stretch reads VQLAIFSNVLGVFLFLLVVAY. Residues 26-40 lie on the Cytoplasmic side of the membrane; the sequence is HYINANTGKPSAKAK.

It belongs to the OST4 family. As to quaternary structure, component of the oligosaccharyltransferase (OST) complex.

The protein localises to the endoplasmic reticulum membrane. Subunit of the oligosaccharyl transferase (OST) complex that catalyzes the initial transfer of a defined glycan (Glc(3)Man(9)GlcNAc(2) in eukaryotes) from the lipid carrier dolichol-pyrophosphate to an asparagine residue within an Asn-X-Ser/Thr consensus motif in nascent polypeptide chains, the first step in protein N-glycosylation. N-glycosylation occurs cotranslationally and the complex associates with the Sec61 complex at the channel-forming translocon complex that mediates protein translocation across the endoplasmic reticulum (ER). All subunits are required for a maximal enzyme activity. The chain is Dolichyl-diphosphooligosaccharide--protein glycosyltransferase subunit 4 from Drosophila yakuba (Fruit fly).